The chain runs to 556 residues: 2-isopropylmalate synthase (556 aa).

The Pyruvate carboxyltransferase domain occupies 33–307 (PIWLSSDLRD…DPQLDFSDID (275 aa)). 4 residues coordinate Mg(2+): D42, H246, H248, and N282. Positions 439–556 (ATAPYTLKGH…ALHQAQEAAA (118 aa)) are regulatory domain.

It belongs to the alpha-IPM synthase/homocitrate synthase family. LeuA type 2 subfamily. In terms of assembly, homodimer. It depends on Mg(2+) as a cofactor.

The protein resides in the cytoplasm. The catalysed reaction is 3-methyl-2-oxobutanoate + acetyl-CoA + H2O = (2S)-2-isopropylmalate + CoA + H(+). It participates in amino-acid biosynthesis; L-leucine biosynthesis; L-leucine from 3-methyl-2-oxobutanoate: step 1/4. In terms of biological role, catalyzes the condensation of the acetyl group of acetyl-CoA with 3-methyl-2-oxobutanoate (2-ketoisovalerate) to form 3-carboxy-3-hydroxy-4-methylpentanoate (2-isopropylmalate). The sequence is that of 2-isopropylmalate synthase from Stutzerimonas stutzeri (strain A1501) (Pseudomonas stutzeri).